Here is a 141-residue protein sequence, read N- to C-terminus: Hemoglobin subunit alpha-D (141 aa).

The 141-residue stretch at 1-141 (MLTAEDKKLI…VAAVLAEKYR (141 aa)) folds into the Globin domain. Residues His58 and His87 each contribute to the heme b site.

It belongs to the globin family. In terms of assembly, heterotetramer of two alpha-D chains and two beta chains. As to expression, red blood cells.

Functionally, involved in oxygen transport from the lung to the various peripheral tissues. This chain is Hemoglobin subunit alpha-D (HBAD), found in Cairina moschata (Muscovy duck).